A 463-amino-acid chain; its full sequence is Asparagine--tRNA ligase (463 aa).

Belongs to the class-II aminoacyl-tRNA synthetase family. Homodimer.

Its subcellular location is the cytoplasm. It catalyses the reaction tRNA(Asn) + L-asparagine + ATP = L-asparaginyl-tRNA(Asn) + AMP + diphosphate + H(+). The sequence is that of Asparagine--tRNA ligase from Bacillus thuringiensis subsp. konkukian (strain 97-27).